A 261-amino-acid polypeptide reads, in one-letter code: Single-strand annealing weakened protein 1 (261 aa).

Interacts with MSH2, MSH3, RAD1, RAD10, RAD51 and RAD52.

Its subcellular location is the nucleus. Catalyzes 3'-non-homologous tail removal of RAD1/RAD10-dependent single-strand annealing recombination intermediates. Plays a key role in targeting RAD1/RAD10 complex to 3'-flap cleavage substrate in recombination. Also contributes to the integrity of ribosomal DNA arrays. This is Single-strand annealing weakened protein 1 (SAW1) from Saccharomyces cerevisiae (strain ATCC 204508 / S288c) (Baker's yeast).